The sequence spans 345 residues: Opioid-binding protein/cell adhesion molecule (345 aa).

The first 27 residues, 1–27, serve as a signal peptide directing secretion; sequence MGVCGYLFLPWKCLVVVSLRLLFLVPT. Ig-like C2-type domains lie at 39-126, 136-219, and 223-310; these read PKAM…PKTS, PQIM…VKIT, and PPYI…ASIT. N-linked (GlcNAc...) asparagine glycans are attached at residues asparagine 44, asparagine 70, and asparagine 140. A disulfide bond links cysteine 57 and cysteine 115. Intrachain disulfides connect cysteine 157/cysteine 202 and cysteine 244/cysteine 296. N-linked (GlcNAc...) asparagine glycosylation is found at asparagine 285, asparagine 293, and asparagine 306. Asparagine 322 carries GPI-anchor amidated asparagine lipidation. A propeptide spans 323–345 (removed in mature form); the sequence is SASRALACLWLSGTLLAHFFIKF.

The protein belongs to the immunoglobulin superfamily. IgLON family.

It localises to the cell membrane. In terms of biological role, binds opioids in the presence of acidic lipids; probably involved in cell contact. This Homo sapiens (Human) protein is Opioid-binding protein/cell adhesion molecule (OPCML).